A 110-amino-acid polypeptide reads, in one-letter code: Late cornified envelope-like proline-rich protein 1 (110 aa).

The segment at 1–24 is disordered; it reads MSSDDKNKPGEPKNEPKQCDPGCE.

The protein belongs to the cornifin (SPRR) family.

The protein is Late cornified envelope-like proline-rich protein 1 (LELP1) of Bos taurus (Bovine).